Here is a 218-residue protein sequence, read N- to C-terminus: Sodium channel regulatory subunit beta-1 (218 aa).

Positions 1–18 (MGTLLAFVVGAALVSSAW) are cleaved as a signal peptide. Residues 19–157 (GGCVEVDSET…DKANRDMASI (139 aa)) are Extracellular-facing. Cystine bridges form between C21–C43 and C40–C121. Positions 22–150 (VEVDSETEAV…KIHLEVVDKA (129 aa)) constitute an Ig-like C2-type domain. N-linked (GlcNAc...) asparagine glycosylation is found at N93, N110, N114, and N135. The helical transmembrane segment at 158–179 (VSEIMMYVLIVVLTIWLVAEMV) threads the bilayer. Residues 180-218 (YCYKKIAAATEAAAQENASEYLAITSESKENCTGVQVAE) lie on the Cytoplasmic side of the membrane.

This sequence belongs to the sodium channel auxiliary subunit SCN1B (TC 8.A.17) family. As to quaternary structure, a voltage-gated sodium (Nav) channel consists of an ion-conducting pore-forming alpha subunit functional on its own that is regulated by one or more beta subunits. Interacts with SCN1A; regulatory subunit of SCN1A/Nav1.1. Interacts with SCN3A; regulatory subunit of SCN3A/Nav1.3. Interacts with SCN4A; regulatory subunit of SCN4A/Nav1.4. Interacts with SCN5A; regulatory subunit of SCN5A/Nav1.5. Interacts with SCN8A; regulatory subunit of SCN8A/Nav1.6. Interacts with SCN9A; regulatory subunit of SCN9A/Nav1.7. Interacts with SCN10A; regulatory subunit of SCN10A/Nav1.8. Interacts with NFASC. Interacts with TMEM65.

The protein resides in the cell membrane. Its subcellular location is the perikaryon. It localises to the cell projection. It is found in the axon. Its function is as follows. Regulatory subunit of multiple voltage-gated sodium (Nav) channels directly mediating the depolarization of excitable membranes. Navs, also called VGSCs (voltage-gated sodium channels) or VDSCs (voltage-dependent sodium channels), operate by switching between closed and open conformations depending on the voltage difference across the membrane. In the open conformation they allow Na(+) ions to selectively pass through the pore, along their electrochemical gradient. The influx of Na+ ions provokes membrane depolarization, initiating the propagation of electrical signals throughout cells and tissues. The accessory beta subunits participate in localization and functional modulation of the Nav channels. Modulates the activity of SCN1A/Nav1.1, SCN2A/Nav1.2, SCN3A/Nav1.3, SCN4A/Nav1.4, SCN5A/Nav1.5, SCN8A/Nav1.6, SCN9A/Nav1.7 and SCN10A/Nav1.8. This is Sodium channel regulatory subunit beta-1 from Bos taurus (Bovine).